The sequence spans 637 residues: Sodium-dependent proline transporter (637 aa).

Residues 1–45 (MKKLQEAHLRKPITPDLLMTPSDQGDVDLDVDFAADRGNWTGKLD) lie on the Cytoplasmic side of the membrane. The residue at position 20 (Thr-20) is a Phosphothreonine. Ser-22 carries the phosphoserine modification. 3 consecutive transmembrane segments (helical) span residues 46–66 (FLLSCIGYCVGLGNVWRFPYR), 74–93 (AFLVPYFLMLAICGIPLFFL), and 117–137 (GAGAAMLLIVGLVAIYYNMII). The Extracellular portion of the chain corresponds to 138–214 (AYVLFYLFAS…QGIGRPGEIR (77 aa)). A glycan (N-linked (GlcNAc...) asparagine) is linked at Asn-182. Transmembrane regions (helical) follow at residues 215–233 (WNLCLCLLLAWVIVFLCIL), 242–259 (VVYFTATFPYLILLMLLV), 295–312 (IFYSLGVGFGGLLTFASY), 324–345 (FIVTLGNAITSILAGFAIFSVL), 378–397 (LPLSPFWSFLFFFMLLTLGL), 425–443 (VFSGLICVAMYLMGLILTT), 459–479 (SFGLMVVVITTCLAVTRVYGI), 500–519 (ACWLFLSPATLLALLVYSIV), and 538–556 (LGILMGLLSCLMIPAGMLV). The Cytoplasmic segment spans residues 557 to 637 (AVLREEGSLW…IAEEEEESMM (81 aa)). Phosphoserine occurs at positions 573 and 582. Phosphothreonine is present on Thr-588. Tyr-591 is subject to Phosphotyrosine. Phosphoserine is present on residues Ser-598 and Ser-600.

It belongs to the sodium:neurotransmitter symporter (SNF) (TC 2.A.22) family. SLC6A7 subfamily.

It localises to the synaptic cell membrane. It carries out the reaction L-proline(out) + chloride(out) + 2 Na(+)(out) = L-proline(in) + chloride(in) + 2 Na(+)(in). The catalysed reaction is L-pipecolate(out) + chloride(out) + 2 Na(+)(out) = L-pipecolate(in) + chloride(in) + 2 Na(+)(in). Functionally, brain specific sodium (and chloride)-dependent proline transporter. Terminates the action of proline by its high affinity sodium-dependent reuptake into presynaptic terminals. The sequence is that of Sodium-dependent proline transporter from Mus musculus (Mouse).